We begin with the raw amino-acid sequence, 194 residues long: Fimbrial protein 987P (194 aa).

An N-terminal signal peptide occupies residues 1–23 (MRMKKSALTLAVLSSLFSGYSLA). Cysteines 46 and 85 form a disulfide.

Belongs to the fimbrial protein family.

The protein resides in the fimbrium. In Escherichia coli, this protein is Fimbrial protein 987P (fasA).